Reading from the N-terminus, the 144-residue chain is MAELIIVYFSSKSNNTHRFVQKLGLPAQRIPVDNRPLEVSTHYLLIVPTYAAGGSDAKGAVPKQVIRFLNNPNNRKHCKGVISSGNTNFGDTFALAGPIISQKLQVPLLHQFELLGTATDVKKVQAIFARLKHHTHDKQNKPTT.

This sequence belongs to the NrdI family.

Functionally, probably involved in ribonucleotide reductase function. The polypeptide is Protein NrdI (Streptococcus pyogenes serotype M4 (strain MGAS10750)).